Consider the following 179-residue polypeptide: DELTA-miturgitoxin-Cp2a (179 aa).

An N-terminal signal peptide occupies residues 1-20 (MKFSLFFGVLFLAILHSCLS). Residues 21 to 47 (ESEKDLTDEDHFRSSDSFLSEIQEESR) constitute a propeptide that is removed on maturation. The Processing quadruplet motif motif lies at 44 to 47 (EESR). 8 disulfide bridges follow: Cys51/Cys66, Cys58/Cys75, Cys65/Cys88, Cys77/Cys86, Cys115/Cys130, Cys122/Cys139, Cys129/Cys158, and Cys141/Cys156. Valine amide is present on Val178.

It belongs to the spider toxin CSTX family. Double-CSTX subfamily. In terms of processing, cleavage of the propeptide depends on the processing quadruplet motif (XXXR, with at least one of X being E). As to expression, expressed by the venom gland.

It localises to the secreted. In terms of biological role, spider venom toxin that exhibits cytolytic activity by forming an alpha-helix across the membrane. Lethal to insect larvae. This is DELTA-miturgitoxin-Cp2a from Cheiracanthium punctorium (Yellow sac spider).